Reading from the N-terminus, the 216-residue chain is MKTLIVVDMQNDFISPLGSLTVPKGEELINPISDLMQDADRDWHRIVVTRDWHPSRHISFAKNHKDKEPYSTYTYHSPRPGDDSTQEGILWPVHCVKNTWGSQLVDQIMDQVVTKHIKIVDKGFLTDREYYSAFHDIWNFHKTDMNKYLEKHHTDEVYIVGVALEYCVKATAISAAELGYKTTVLLDYTRPISDDPEVINKVKEELKAHNINVVDK.

Aspartate 8 is an active-site residue. 3 residues coordinate Zn(2+): aspartate 51, histidine 53, and histidine 94. Lysine 122 is an active-site residue. Cysteine 167 acts as the Nucleophile in catalysis.

Belongs to the isochorismatase family.

The protein resides in the cytoplasm. It localises to the nucleus. Its subcellular location is the peroxisome. The catalysed reaction is nicotinamide + H2O = nicotinate + NH4(+). It functions in the pathway cofactor biosynthesis; nicotinate biosynthesis; nicotinate from nicotinamide: step 1/1. Its activity is regulated as follows. Inhibited by N-ethylmaleimide, HgCl(2) and PCMB. Competitively inhibited by NAD, NMN and 3-acetylpyridine. Catalyzes the deamidation of nicotinamide, an early step in the NAD(+) salvage pathway. Positively regulates SIR2-mediated silencing and longevity by preventing the accumulation of intracellular nicotinamide, an inhibitor of SIR2, during times of stress. Also acts on nicotinyl hydroxamate. This chain is Nicotinamidase (PNC1), found in Saccharomyces cerevisiae (strain ATCC 204508 / S288c) (Baker's yeast).